A 72-amino-acid chain; its full sequence is Translation initiation factor IF-1 (72 aa).

Residues 1 to 72 form the S1-like domain; sequence MAKEDTLEFP…SKGRINYRFK (72 aa).

It belongs to the IF-1 family. As to quaternary structure, component of the 30S ribosomal translation pre-initiation complex which assembles on the 30S ribosome in the order IF-2 and IF-3, IF-1 and N-formylmethionyl-tRNA(fMet); mRNA recruitment can occur at any time during PIC assembly.

The protein localises to the cytoplasm. Functionally, one of the essential components for the initiation of protein synthesis. Stabilizes the binding of IF-2 and IF-3 on the 30S subunit to which N-formylmethionyl-tRNA(fMet) subsequently binds. Helps modulate mRNA selection, yielding the 30S pre-initiation complex (PIC). Upon addition of the 50S ribosomal subunit IF-1, IF-2 and IF-3 are released leaving the mature 70S translation initiation complex. This chain is Translation initiation factor IF-1, found in Cereibacter sphaeroides (strain ATCC 17029 / ATH 2.4.9) (Rhodobacter sphaeroides).